The following is a 342-amino-acid chain: Endoplasmic reticulum junction formation protein lunapark-1 (342 aa).

The Cytoplasmic segment spans residues 1–39; it reads MGNLFSRNKSPATELERVALSIDDLKKRLQTISSSNTNT. Positions 13–34 form a coiled coil; the sequence is TELERVALSIDDLKKRLQTISS. Residues 40-60 form a helical membrane-spanning segment; the sequence is LYYYYMSIVVILSIAMAHTWL. Residues 61–68 lie on the Lumenal side of the membrane; it reads RFEDPQKT. Residues 69-89 form a helical membrane-spanning segment; the sequence is YVACALMLGAIGIVLAGRYVI. Topologically, residues 90-342 are cytoplasmic; it reads NGFFSWRTNR…ESKTMETEFH (253 aa). Residues 102-136 adopt a coiled-coil conformation; the sequence is QKLENAISQKTTLLDLVKETLKFKEAKEILDRYEK. The interval 161–191 is disordered; that stretch reads ADSSMFATPKQEQKRVETPTAQGPNSAMNSM. The segment covering 179–191 has biased composition (polar residues); the sequence is PTAQGPNSAMNSM. Residues 236 to 261 form a C4-type; plays a role in ER morphology zinc finger; it reads CSICHTHNGMSTPAEYPYISFRCFEC. The segment at 278–342 is disordered; that stretch reads RPPMGPKGIQ…ESKTMETEFH (65 aa). The segment covering 295 to 321 has biased composition (polar residues); sequence SENTHNMMENQKPSTDLTPSASQNGSE. Basic and acidic residues predominate over residues 322–342; sequence KGSDSENEKVPESKTMETEFH.

This sequence belongs to the lunapark family. Expressed in cell bodies along the ventral cord around the pharynx and the tail both in larvae and adults. Also expressed in muscles and hypodermal cells.

The protein resides in the endoplasmic reticulum membrane. Its function is as follows. Plays a role in tubular endoplasmic reticulum network formation and maintenance. May be involved in central nervous system development. Has a presynaptic role in neurotransmission. Likely to operate in synaptogenesis by regulating vesicular transport or localization. Required for correct localization of rab-3 and snb-1. The polypeptide is Endoplasmic reticulum junction formation protein lunapark-1 (lnp-1) (Caenorhabditis elegans).